Consider the following 325-residue polypeptide: Hydroxylase/desaturase poxK (325 aa).

A compositionally biased stretch (low complexity) spans 1 to 12 (MTATATPVPTVA). The disordered stretch occupies residues 1-25 (MTATATPVPTVASHAQDITLPPPPK).

The protein belongs to the asaB hydroxylase/desaturase family.

The protein operates within secondary metabolite biosynthesis. Functionally, hydroxylase/desaturase; part of the gene cluster that mediates the biosynthesis of oxaleimides, cytotoxic compounds containing an unusual disubstituted succinimide moiety. The first step of the pathway is provided by the HR-PKS poxF that serves in a new mode of collaborative biosynthesis with the PKS-NRPS poxE, by providing the olefin containing amino acid substrate via the synthesis of an ACP-bound dec-4-enoate. The cytochrome P450 monooxygenase poxM-catalyzed oxidation at the alpha-position creates the enzyme-bound 2-hydroxydec-4-enoyl-ACP thioester, which may be prone to spontaneous hydrolysis to yield 2-hydroxydec-4-enoic acid due to increased electrophilicity of the carbonyl. 2-hydroxydec-4-enoic acid can then be further oxidized by poxM to yield the alpha-ketoacid 2-oxodec-4-enoicacid, which is reductively aminated by the aminotransferase poxL to yield (S,E)-2-aminodec-4-enoic acid. The Hybrid PKS-NRPS synthetase poxE then performs condensation between the octaketide product of its PKS modules and the amino group of (S,E)-2-aminodec-4-enoic acid which is activated and incorporated by the adenylation domain. The resulting aminoacyl product can be cyclized by the Diels-Alderase PoxQ and reductively released by the reductive (R) domain of poxE to yield an aldehyde intermediate. The released aldehyde is then substrate for a Knoevenagel condensation by the hydrolyase poxO followed by an oxidation at the 5-position of the pyrrolidone ring. The presence of the olefin from the amino acid building block allows for migration of the substituted allyl group to occur. This allylic transposition reaction takes place in a conjugate addition, semipinacol-like fashion to yield a succinimide intermediate. Iterative two-electron oxidations of the C7 methyl of the succinimide intermediate to the carboxylic acid can be catalyzed by one of two remaining cytochrome P450 monooxygenasess poxC or poxD to yield oxaleimide A. Subsequent oxidation yields the maleimide scaffold oxaleimide I. Both oxaleimide A and oxaleimide I can undergo oxidative modifications in the decalin ring to yield the series of products oxaleimides B to H. This Penicillium oxalicum protein is Hydroxylase/desaturase poxK.